The sequence spans 284 residues: Aquaporin NIP1-1 (284 aa).

Positions 1-12 are enriched in polar residues; the sequence is MAGGDNNSQTTN. Residues 1 to 28 form a disordered region; sequence MAGGDNNSQTTNGGSGHEQRAMEEGRKQ. The segment covering 17–28 has biased composition (basic and acidic residues); sequence HEQRAMEEGRKQ. Helical transmembrane passes span 50 to 70 and 78 to 98; these read IIAEIFGTYFLIFAGCGAVTI and ITFPGVAIVWGLAVMVMVYAV. The NPA 1 signature appears at 107–109; it reads NPA. Helical transmembrane passes span 129–149, 166–186, and 194–214; these read AAAQMLGATLAAGTLRLMFGG, SLVLEFIITFYLMFVISGVAT, and LAGLAVGATILLNVLIAGPIS. The NPA 2 motif lies at 219–221; that stretch reads NPA. Residues 236-256 form a helical membrane-spanning segment; that stretch reads IWVYIVGPVAGAVAGAWAYNI.

The protein belongs to the MIP/aquaporin (TC 1.A.8) family. NIP (TC 1.A.8.12) subfamily. In terms of tissue distribution, expressed in leaves and at lower levels in roots and anthers.

Its subcellular location is the membrane. Aquaporins facilitate the transport of water and small neutral solutes across cell membranes. The polypeptide is Aquaporin NIP1-1 (NIP1-1) (Oryza sativa subsp. japonica (Rice)).